Here is a 95-residue protein sequence, read N- to C-terminus: Succinate dehydrogenase membrane anchor subunit (95 aa).

Residues 1 to 19 lie on the Mitochondrial matrix side of the membrane; sequence MYKTLLAQVFFHSIAKKKL. Residues 20-40 form a helical membrane-spanning segment; sequence YFFWLPRLFSLLLVPGFLFDI. Glu-41 is a topological domain (mitochondrial intermembrane). The chain crosses the membrane as a helical span at residues 42–62; it reads ILFLFHPIILLHASLGLSVII. His-53 serves as a coordination point for heme. Residues 63 to 74 lie on the Mitochondrial matrix side of the membrane; sequence EDYIHIETIKFQ. An a ubiquinone-binding site is contributed by Tyr-65. Residues 75-95 form a helical membrane-spanning segment; sequence YLSLIKLLLVLLINLNILYLL.

In terms of assembly, part of an enzyme complex containing four subunits: a flavoprotein, an iron-sulfur protein, plus two membrane-anchoring proteins. Heme is required as a cofactor.

The protein resides in the mitochondrion inner membrane. Its pathway is carbohydrate metabolism; tricarboxylic acid cycle. Its function is as follows. Membrane-anchoring subunit of succinate dehydrogenase (SDH). In Porphyra purpurea (Red seaweed), this protein is Succinate dehydrogenase membrane anchor subunit (SDH4).